The chain runs to 372 residues: Lipoyl synthase (372 aa).

Residues Cys37, Cys42, Cys48, Cys63, Cys67, Cys70, and Ser292 each coordinate [4Fe-4S] cluster. The 233-residue stretch at Trp49–Leu281 folds into the Radical SAM core domain. The tract at residues Leu338–Arg372 is disordered. Residues Ala354–Arg372 are compositionally biased toward low complexity.

The protein belongs to the radical SAM superfamily. Lipoyl synthase family. The cofactor is [4Fe-4S] cluster.

The protein resides in the cytoplasm. The enzyme catalyses [[Fe-S] cluster scaffold protein carrying a second [4Fe-4S](2+) cluster] + N(6)-octanoyl-L-lysyl-[protein] + 2 oxidized [2Fe-2S]-[ferredoxin] + 2 S-adenosyl-L-methionine + 4 H(+) = [[Fe-S] cluster scaffold protein] + N(6)-[(R)-dihydrolipoyl]-L-lysyl-[protein] + 4 Fe(3+) + 2 hydrogen sulfide + 2 5'-deoxyadenosine + 2 L-methionine + 2 reduced [2Fe-2S]-[ferredoxin]. The protein operates within protein modification; protein lipoylation via endogenous pathway; protein N(6)-(lipoyl)lysine from octanoyl-[acyl-carrier-protein]: step 2/2. Functionally, catalyzes the radical-mediated insertion of two sulfur atoms into the C-6 and C-8 positions of the octanoyl moiety bound to the lipoyl domains of lipoate-dependent enzymes, thereby converting the octanoylated domains into lipoylated derivatives. The chain is Lipoyl synthase from Sorangium cellulosum (strain So ce56) (Polyangium cellulosum (strain So ce56)).